The chain runs to 324 residues: DnaJ homolog subfamily B member 2 (324 aa).

An N-acetylalanine modification is found at A2. The region spanning 3-69 (SYYEILDVPR…HKREIYDRYG (67 aa)) is the J domain. Disordered stretches follow at residues 70–91 (REGLTGAGSGPSRSETGGAGPG) and 218–324 (LSRR…CHIL). UIM domains follow at residues 207–226 (GVPDDLALGLELSRREQQPS) and 250–269 (SEDEDLQLAMAYSLSEMEAA). Phosphoserine is present on S311. The segment covering 314–324 (SEEKASRCHIL) has biased composition (basic and acidic residues). At C321 the chain carries Cysteine methyl ester. C321 is lipidated: S-geranylgeranyl cysteine. Residues 321–324 (CHIL) carry the CAAX motif motif. The propeptide at 322-324 (HIL) is removed in mature form.

As to quaternary structure, interacts with HSP70 (HSPA1A or HSPA1B). Interacts with HSPA8/Hsc70. Interacts with PSMA3 and most probably with the whole proteasomal complex. In terms of processing, ubiquitinated by STUB1; does not lead to proteasomal degradation.

The protein localises to the cytoplasm. Its subcellular location is the nucleus. The protein resides in the endoplasmic reticulum membrane. Its function is as follows. Functions as a co-chaperone, regulating the substrate binding and activating the ATPase activity of chaperones of the HSP70/heat shock protein 70 family. In parallel, also contributes to the ubiquitin-dependent proteasomal degradation of misfolded proteins. Thereby, may regulate the aggregation and promote the functional recovery of misfolded proteins like HTT, MC4R, PRKN, RHO and SOD1 and be crucial for many biological processes. Isoform 1 which is localized to the endoplasmic reticulum membranes may specifically function in ER-associated protein degradation of misfolded proteins. The protein is DnaJ homolog subfamily B member 2 of Mus musculus (Mouse).